The primary structure comprises 373 residues: Spermidine/putrescine import ATP-binding protein PotA (373 aa).

Residues 11 to 241 (IELRSLKKSY…PSNLFVAKFI (231 aa)) enclose the ABC transporter domain. 43–50 (GPSGCGKT) provides a ligand contact to ATP.

Belongs to the ABC transporter superfamily. Spermidine/putrescine importer (TC 3.A.1.11.1) family. As to quaternary structure, the complex is composed of two ATP-binding proteins (PotA), two transmembrane proteins (PotB and PotC) and a solute-binding protein (PotD).

It is found in the cell inner membrane. It carries out the reaction ATP + H2O + polyamine-[polyamine-binding protein]Side 1 = ADP + phosphate + polyamineSide 2 + [polyamine-binding protein]Side 1.. Functionally, part of the ABC transporter complex PotABCD involved in spermidine/putrescine import. Responsible for energy coupling to the transport system. The chain is Spermidine/putrescine import ATP-binding protein PotA from Mannheimia succiniciproducens (strain KCTC 0769BP / MBEL55E).